Consider the following 146-residue polypeptide: Hut operon positive regulatory protein (146 aa).

This sequence belongs to the HutP family. In terms of assembly, homohexamer.

Its function is as follows. Antiterminator that binds to cis-acting regulatory sequences on the mRNA in the presence of histidine, thereby suppressing transcription termination and activating the hut operon for histidine utilization. The chain is Hut operon positive regulatory protein from Bacillus cereus (strain G9842).